A 106-amino-acid chain; its full sequence is uncharacterized protein (106 aa).

Belongs to the csb family.

This is an uncharacterized protein from Dictyostelium discoideum (Social amoeba).